The following is a 680-amino-acid chain: Putative cyclin-dependent serine/threonine-protein kinase DDB_G0272797/DDB_G0274007 (680 aa).

The Protein kinase domain maps to 4–381 (YIILSKCGQG…SLEALEHPWF (378 aa)). Residues 10–18 (CGQGTYGSV) and lysine 33 contribute to the ATP site. Aspartate 125 functions as the Proton acceptor in the catalytic mechanism. Disordered stretches follow at residues 243 to 299 (QQQQ…LQSP), 409 to 444 (RQLQ…QRQH), 483 to 507 (LAQH…QHQQ), and 597 to 680 (QQQQ…KSNG). Over residues 257–286 (NNNNNNNNNNNNNNNNNNNNNNNNNNNNNN) the composition is skewed to low complexity. Polar residues predominate over residues 287–297 (KYNNISTSCLQ). Composition is skewed to low complexity over residues 410–444 (QLQQ…QRQH), 483–494 (LAQHQQYNSQQH), and 597–616 (QQQQ…PPQH). Positions 617–631 (QHQHQHQHQHQHQHQ) are enriched in basic residues. Over residues 632–642 (HQPQPQHQHQP) the composition is skewed to low complexity. Positions 643–655 (QPQPQPTPTPTPT) are enriched in pro residues. A compositionally biased stretch (low complexity) spans 656–680 (STPTTTTIPPTITTTIQPTISKSNG).

Belongs to the protein kinase superfamily. CMGC Ser/Thr protein kinase family. CDC2/CDKX subfamily.

The enzyme catalyses L-seryl-[protein] + ATP = O-phospho-L-seryl-[protein] + ADP + H(+). It carries out the reaction L-threonyl-[protein] + ATP = O-phospho-L-threonyl-[protein] + ADP + H(+). This is Putative cyclin-dependent serine/threonine-protein kinase DDB_G0272797/DDB_G0274007 from Dictyostelium discoideum (Social amoeba).